Reading from the N-terminus, the 551-residue chain is Putative ABC transporter ATP-binding protein BT9727_3105 (551 aa).

ABC transporter domains follow at residues 5 to 243 (AEIN…FRPF) and 293 to 525 (LSAE…SINR). ATP contacts are provided by residues 39–46 (GGSGSGKT) and 327–334 (GKNGTGKS).

Belongs to the ABC transporter superfamily.

Its subcellular location is the cell membrane. Probably part of an ABC transporter complex. Responsible for energy coupling to the transport system. The polypeptide is Putative ABC transporter ATP-binding protein BT9727_3105 (Bacillus thuringiensis subsp. konkukian (strain 97-27)).